The following is a 446-amino-acid chain: Phosphoglucosamine mutase (446 aa).

Serine 102 functions as the Phosphoserine intermediate in the catalytic mechanism. Mg(2+) is bound by residues serine 102, aspartate 241, aspartate 243, and aspartate 245. Serine 102 carries the post-translational modification Phosphoserine.

Belongs to the phosphohexose mutase family. It depends on Mg(2+) as a cofactor. Post-translationally, activated by phosphorylation.

It catalyses the reaction alpha-D-glucosamine 1-phosphate = D-glucosamine 6-phosphate. In terms of biological role, catalyzes the conversion of glucosamine-6-phosphate to glucosamine-1-phosphate. The chain is Phosphoglucosamine mutase from Yersinia pseudotuberculosis serotype O:1b (strain IP 31758).